The sequence spans 365 residues: Histidinol-phosphate aminotransferase (365 aa).

Lysine 220 bears the N6-(pyridoxal phosphate)lysine mark.

It belongs to the class-II pyridoxal-phosphate-dependent aminotransferase family. Histidinol-phosphate aminotransferase subfamily. In terms of assembly, homodimer. It depends on pyridoxal 5'-phosphate as a cofactor.

It carries out the reaction L-histidinol phosphate + 2-oxoglutarate = 3-(imidazol-4-yl)-2-oxopropyl phosphate + L-glutamate. Its pathway is amino-acid biosynthesis; L-histidine biosynthesis; L-histidine from 5-phospho-alpha-D-ribose 1-diphosphate: step 7/9. The protein is Histidinol-phosphate aminotransferase of Neisseria meningitidis serogroup A / serotype 4A (strain DSM 15465 / Z2491).